Reading from the N-terminus, the 262-residue chain is MARGPKKHLKRLAAPSHWMLDKLSGTYAPRPSAGPHKLRESLPLVVFLRNRLKYALNGREVKAIMMQQHVQVDGKVRTDTTYPAGFMDVITLEATNEHFRLVYDVKGKFAVHRISAEEAAYKLGKVKKVQLGKKGVPYVVTHDGRTIRYPDPLIRANDTVKIDLATGKIDDFIKFDTGRLVMVTGGRNLGRVGVIVHREKHEGGFDLVHIKDALENTFVTRLSNVFVIGTEAGKPWVSLPKGKGIKLSISEERDRRRAQQGL.

The S4 RNA-binding domain occupies 42-105 (LPLVVFLRNR…NEHFRLVYDV (64 aa)). Residues 178–211 (GRLVMVTGGRNLGRVGVIVHREKHEGGFDLVHIK) form the KOW domain.

This sequence belongs to the eukaryotic ribosomal protein eS4 family. As to quaternary structure, component of the small ribosomal subunit. Mature ribosomes consist of a small (40S) and a large (60S) subunit. The 40S subunit contains about 32 different proteins and 1 molecule of RNA (18S). The 60S subunit contains 45 different proteins and 3 molecules of RNA (25S, 5.8S and 5S).

It localises to the cytoplasm. Component of the ribosome, a large ribonucleoprotein complex responsible for the synthesis of proteins in the cell. The small ribosomal subunit (SSU) binds messenger RNAs (mRNAs) and translates the encoded message by selecting cognate aminoacyl-transfer RNA (tRNA) molecules. The large subunit (LSU) contains the ribosomal catalytic site termed the peptidyl transferase center (PTC), which catalyzes the formation of peptide bonds, thereby polymerizing the amino acids delivered by tRNAs into a polypeptide chain. The nascent polypeptides leave the ribosome through a tunnel in the LSU and interact with protein factors that function in enzymatic processing, targeting, and the membrane insertion of nascent chains at the exit of the ribosomal tunnel. The chain is Small ribosomal subunit protein eS4 (RPS42) from Candida albicans (strain SC5314 / ATCC MYA-2876) (Yeast).